We begin with the raw amino-acid sequence, 301 residues long: Phosphatidylserine decarboxylase proenzyme (301 aa).

Residues Asp117, His173, and Ser260 each act as charge relay system; for autoendoproteolytic cleavage activity in the active site. Ser260 acts as the Schiff-base intermediate with substrate; via pyruvic acid; for decarboxylase activity in catalysis. Ser260 bears the Pyruvic acid (Ser); by autocatalysis mark.

The protein belongs to the phosphatidylserine decarboxylase family. PSD-B subfamily. Prokaryotic type II sub-subfamily. Heterodimer of a large membrane-associated beta subunit and a small pyruvoyl-containing alpha subunit. It depends on pyruvate as a cofactor. Is synthesized initially as an inactive proenzyme. Formation of the active enzyme involves a self-maturation process in which the active site pyruvoyl group is generated from an internal serine residue via an autocatalytic post-translational modification. Two non-identical subunits are generated from the proenzyme in this reaction, and the pyruvate is formed at the N-terminus of the alpha chain, which is derived from the carboxyl end of the proenzyme. The autoendoproteolytic cleavage occurs by a canonical serine protease mechanism, in which the side chain hydroxyl group of the serine supplies its oxygen atom to form the C-terminus of the beta chain, while the remainder of the serine residue undergoes an oxidative deamination to produce ammonia and the pyruvoyl prosthetic group on the alpha chain. During this reaction, the Ser that is part of the protease active site of the proenzyme becomes the pyruvoyl prosthetic group, which constitutes an essential element of the active site of the mature decarboxylase.

The protein localises to the cell membrane. It carries out the reaction a 1,2-diacyl-sn-glycero-3-phospho-L-serine + H(+) = a 1,2-diacyl-sn-glycero-3-phosphoethanolamine + CO2. Its pathway is phospholipid metabolism; phosphatidylethanolamine biosynthesis; phosphatidylethanolamine from CDP-diacylglycerol: step 2/2. In terms of biological role, catalyzes the formation of phosphatidylethanolamine (PtdEtn) from phosphatidylserine (PtdSer). The chain is Phosphatidylserine decarboxylase proenzyme from Chlamydia trachomatis serovar L2b (strain UCH-1/proctitis).